A 424-amino-acid polypeptide reads, in one-letter code: Serine incorporator 5 (424 aa).

Over 1 to 6 (MYALYF) the chain is Extracellular. The helical transmembrane segment at 7–23 (ILVVVLCCIMMSTTVAH) threads the bilayer. Residues 24–52 (KMKEHIPFFEDMCKGIKAGDTCEKLVGYS) lie on the Cytoplasmic side of the membrane. The chain crosses the membrane as a helical span at residues 53-73 (AVYRVCFGMACFFFIFCLLTL). Residues 74–87 (KINNSKSCRAHIHN) lie on the Extracellular side of the membrane. Asparagine 76 is a glycosylation site (N-linked (GlcNAc...) asparagine). A helical membrane pass occupies residues 88 to 108 (GFWFFKLLLLGAMCSGAFFIP). Residues 109–119 (DQDTFLNAWRY) lie on the Cytoplasmic side of the membrane. A helical transmembrane segment spans residues 120 to 140 (VGAVGGFLFIGIQLLLLVEFA). At 141–161 (HKWNKNWTAGTASNKLWYASL) the chain is on the extracellular side. Asparagine 146 is a glycosylation site (N-linked (GlcNAc...) asparagine). The chain crosses the membrane as a helical span at residues 162 to 182 (ALVTLIMYSIATGGLVLMAVF). The Cytoplasmic portion of the chain corresponds to 183–193 (YTQKDGCMENK). Residues 194-214 (ILLGVNGGLCVLISLVAISPC) traverse the membrane as a helical segment. The Extracellular segment spans residues 215-221 (VQNRQPH). Residues 222 to 242 (SGLLQSGVISCYVTYLTFSAL) form a helical membrane-spanning segment. Topologically, residues 243-274 (SSKPAEVVLDEHGKNVTICVPDFGQDLYRDEN) are cytoplasmic. A helical membrane pass occupies residues 275 to 295 (LVTILGTSLLIGCILYSCLTS). Residues 296 to 348 (TTRSSSDALQGRYAAPELEIARCCFCFSPGGEDTEEQQQGKEGPRVIYDEKKG) are Extracellular-facing. A helical membrane pass occupies residues 349-369 (TVYIYSYFHFVFFLASLYVMM). The Cytoplasmic segment spans residues 370–391 (TVTNWFNYESANIESFFSGSWS). The chain crosses the membrane as a helical span at residues 392–412 (IFWVKMASCWICVLLYLCTLV). Residues 413 to 424 (APLCCPTREFSV) are Extracellular-facing.

This sequence belongs to the TDE1 family.

It localises to the cell membrane. It catalyses the reaction a 1,2-diacyl-sn-glycero-3-phospho-L-serine(in) = a 1,2-diacyl-sn-glycero-3-phospho-L-serine(out). It carries out the reaction a 1,2-diacyl-sn-glycero-3-phosphocholine(in) = a 1,2-diacyl-sn-glycero-3-phosphocholine(out). The catalysed reaction is a 1,2-diacyl-sn-glycero-3-phosphoethanolamine(in) = a 1,2-diacyl-sn-glycero-3-phosphoethanolamine(out). Restriction factor required to restrict infectivity of gammaretroviruses: acts by inhibiting an early step of viral infection. Impairs the penetration of the viral particle into the cytoplasm. Non-ATP-dependent, non-specific lipid transporter for phosphatidylserine, phosphatidylcholine, and phosphatidylethanolamine. Functions as a scramblase that flips lipids in both directions across the membrane. Phospholipid scrambling results in gammaretroviral surface exposure of phosphatidylserine and loss of membrane asymmetry, which leads to loss of infectivity. Enhances the incorporation of serine into phosphatidylserine and sphingolipids. May play a role in providing serine molecules for the formation of myelin glycosphingolipids in oligodendrocytes. The protein is Serine incorporator 5 (SERINC5) of Macaca fascicularis (Crab-eating macaque).